The following is a 534-amino-acid chain: Calcium uptake protein 1 homolog, mitochondrial (534 aa).

The transit peptide at 1–32 directs the protein to the mitochondrion; sequence MLHCSFLRVIPIKNASKRLIIVRSLTSAPAKT. The disordered stretch occupies residues 131 to 150; that stretch reads PEASQKEEVTESNGEVEEVK. EF-hand domains lie at 271-306, 338-359, and 466-501; these read TSHADFALAFKIFDVDGNGALDKEEFTKVQQLIMSQ, KDGKGSLSSEKFIEFQERLQHD, and LSDHVVDVVITLFDDNLDGKLSHEEMVAVMRRRMRR. Residues aspartate 284, aspartate 286, asparagine 288, and glutamate 295 each coordinate Ca(2+).

This sequence belongs to the MICU1 family. MICU1 subfamily. Expressed at low levels in PLM touch receptor neurons, germ cells, epidermis, and muscles.

The protein resides in the mitochondrion intermembrane space. It is found in the mitochondrion inner membrane. Calcium sensor of the mitochondrial calcium uniporter (mcu-1) channel, which senses calcium level via its EF-hand domains. At low calcium levels, micu-1 occludes the pore of the mcu-1 channel, preventing mitochondrial calcium uptake. At higher calcium levels, calcium-binding to micu-1 induces a conformational change that weakens mcu-1-micu-1 interactions and moves micu-1 away from the pore, allowing calcium permeation through the mcu-1 channel. Also required to protect against manganese toxicity by preventing manganese uptake by mcu-1. Modulates the activity of the mitochondrial calcium uniporter protein mcu-1 depending on the level of intracellular calcium in PLM touch receptor neurons following axonal injury. The chain is Calcium uptake protein 1 homolog, mitochondrial from Caenorhabditis elegans.